Consider the following 74-residue polypeptide: Large ribosomal subunit protein bL31 (74 aa).

Zn(2+)-binding residues include cysteine 17, cysteine 19, cysteine 38, and cysteine 41.

This sequence belongs to the bacterial ribosomal protein bL31 family. Type A subfamily. Part of the 50S ribosomal subunit. Zn(2+) serves as cofactor.

In terms of biological role, binds the 23S rRNA. The chain is Large ribosomal subunit protein bL31 from Gloeobacter violaceus (strain ATCC 29082 / PCC 7421).